A 619-amino-acid polypeptide reads, in one-letter code: Calnexin (619 aa).

The N-terminal stretch at 1-21 is a signal peptide; that stretch reads MVNRKWMYIFIQFLLVSSIRS. Asp109 lines the Ca(2+) pocket. A disulfide bond links Cys152 and Cys186. The an alpha-D-glucoside site is built by Tyr156, Lys158, Tyr177, and Asp184. N-linked (GlcNAc...) asparagine glycosylation occurs at Asn203. The tract at residues 268-401 is p domain (Extended arm); it reads IFDETDLKPV…RLIDNPNYFE (134 aa). Tandem repeats lie at residues 270–282, 287–299, 306–318, 325–337, and 340–350. 4 X approximate repeats stretches follow at residues 270-337 and 340-397; these read DETD…WDED and GSWE…IDNP. An intrachain disulfide couples Cys352 to Cys358. 3 repeat units span residues 359–369, 373–383, and 387–397. Glu417 contributes to the an alpha-D-glucoside binding site. Asp428 is a Ca(2+) binding site. A helical membrane pass occupies residues 481–501; sequence LWAVYILCVLLPLVAIGVFCF. A disordered region spans residues 538–619; sequence GDEEDDVNQP…AKRRTARRGD (82 aa). Polar residues predominate over residues 547–557; sequence PGPSGSQSNPE. The span at 566–577 shows a compositional bias: low complexity; sequence EQQSANSSQSSA. N-linked (GlcNAc...) asparagine glycosylation occurs at Asn571. A compositionally biased stretch (basic and acidic residues) spans 585 to 601; that stretch reads HVVPENEPVKPTEEFAK. Basic residues predominate over residues 610–619; that stretch reads AKRRTARRGD.

It belongs to the calreticulin family. Post-translationally, glycosylation is important for its biological activity. Expressed ubiquitously in every blastomere of the embryo up to the gastrulation stage. Expression becomes gradually restricted to the head and tail regions at the comma stage during embryogenesis. During postembryonic development, expressed prominently in the H-shaped excretory cell, in the neurons of head (including ASK and ADL) and tail (including PHA and PHB), in the dorsal and ventral nerve cords, and in the spermatheca. Expressed in the spicules of the male tail (at protein level).

It localises to the endoplasmic reticulum membrane. Its subcellular location is the cytoplasm. The protein resides in the perinuclear region. The protein localises to the cytoplasmic vesicle. Calcium-binding protein that interacts with newly synthesized monoglucosylated glycoproteins in the endoplasmic reticulum. It may act in assisting protein assembly and/or in the retention within the ER of unassembled protein subunits. It seems to play a major role in the quality control apparatus of the ER by the retention of incorrectly folded proteins. Required for embryogenesis and larval development under heat and ER stress conditions. May be important for germ cell development. Involved in neuronal necrotic cell death. In Caenorhabditis elegans, this protein is Calnexin (cnx-1).